The chain runs to 303 residues: Probable acetylxylan esterase A (303 aa).

An N-terminal signal peptide occupies residues 1–23 (MLSTHLLFLATTLLTSLFHPIAA). The active-site Charge relay system is Ser147. Residue Asn189 is glycosylated (N-linked (GlcNAc...) asparagine).

Belongs to the carbohydrate esterase 1 (CE1) family. AxeA subfamily. In terms of assembly, monomer.

Its subcellular location is the secreted. The enzyme catalyses Deacetylation of xylans and xylo-oligosaccharides.. Its pathway is glycan degradation; xylan degradation. Acetylxylan esterase involved in the hydrolysis of xylan, a major structural heterogeneous polysaccharide found in plant biomass representing the second most abundant polysaccharide in the biosphere, after cellulose. Degrades acetylated xylans by cleaving acetyl side groups from the hetero-xylan backbone. In Aspergillus niger (strain ATCC MYA-4892 / CBS 513.88 / FGSC A1513), this protein is Probable acetylxylan esterase A (axeA).